Consider the following 95-residue polypeptide: Cerebratulus toxin A-III (95 aa).

Disulfide bonds link Cys17–Cys38, Cys23–Cys34, and Cys48–Cys61.

The protein belongs to the worm cytolysin family.

Its subcellular location is the secreted. Permeabilizes a variety of cells. Forms large pores which allows the release of large proteins almost as rapidly as small organic molecules and inorganic ions. At sublytic concentrations, the toxin also inhibits protein kinase C and endogenous voltage-gated cation selective (sodium, calcium) channels occurring in the nervous and cardiovascular systems. This Cerebratulus lacteus (Milky ribbon worm) protein is Cerebratulus toxin A-III.